The primary structure comprises 427 residues: Trigger factor (427 aa).

The PPIase FKBP-type domain occupies 163–248 (GDTVVIDFVG…IHEVKAKEVP (86 aa)).

Belongs to the FKBP-type PPIase family. Tig subfamily.

The protein resides in the cytoplasm. The catalysed reaction is [protein]-peptidylproline (omega=180) = [protein]-peptidylproline (omega=0). Its function is as follows. Involved in protein export. Acts as a chaperone by maintaining the newly synthesized protein in an open conformation. Functions as a peptidyl-prolyl cis-trans isomerase. The polypeptide is Trigger factor (Streptococcus pneumoniae (strain CGSP14)).